An 80-amino-acid polypeptide reads, in one-letter code: Dermaseptin-A5 (80 aa).

The signal sequence occupies residues 1 to 22 (MAFLKKSLFLVLFLGLVSLSIC). Residues 23–43 (EEEKRENEDEEEQEDDEQSEM) constitute a propeptide that is removed on maturation. A disordered region spans residues 24–45 (EEKRENEDEEEQEDDEQSEMKR). The span at 30-40 (EDEEEQEDDEQ) shows a compositional bias: acidic residues. Val-77 carries the post-translational modification Valine amide. The propeptide occupies 79 to 80 (EQ).

Belongs to the frog skin active peptide (FSAP) family. Dermaseptin subfamily. As to expression, expressed by the skin glands.

It is found in the secreted. Possesses a potent antimicrobial activity against Gram-positive and Gram-negative bacteria. Probably acts by disturbing membrane functions with its amphipathic structure. The polypeptide is Dermaseptin-A5 (Agalychnis annae (Blue-sided leaf frog)).